The chain runs to 433 residues: Elongation factor 1-alpha (433 aa).

Residues 5–227 form the tr-type G domain; that stretch reads KPHLNLVVIG…AFDFFKEPPR (223 aa). Positions 14–21 are G1; it reads GHIDHGKS. 14–21 provides a ligand contact to GTP; sequence GHIDHGKS. Ser21 provides a ligand contact to Mg(2+). Residues 70–74 form a G2 region; sequence GITID. The tract at residues 91–94 is G3; sequence DAPG. GTP is bound by residues 91-95 and 153-156; these read DAPGH and NKMD. Positions 153–156 are G4; that stretch reads NKMD. Positions 192–194 are G5; the sequence is SAW.

It belongs to the TRAFAC class translation factor GTPase superfamily. Classic translation factor GTPase family. EF-Tu/EF-1A subfamily.

The protein localises to the cytoplasm. It catalyses the reaction GTP + H2O = GDP + phosphate + H(+). Its function is as follows. GTP hydrolase that promotes the GTP-dependent binding of aminoacyl-tRNA to the A-site of ribosomes during protein biosynthesis. The chain is Elongation factor 1-alpha from Thermofilum pendens (strain DSM 2475 / Hrk 5).